A 130-amino-acid chain; its full sequence is Protein ApaG (130 aa).

The region spanning 3–127 (RALTRDIEVT…FSLDSPGLVR (125 aa)) is the ApaG domain.

In Rhizobium meliloti (strain 1021) (Ensifer meliloti), this protein is Protein ApaG.